The chain runs to 401 residues: S-adenosylmethionine synthase (401 aa).

135–140 is an ATP binding site; that stretch reads GHGSGD.

It belongs to the AdoMet synthase 2 family. Mg(2+) serves as cofactor.

It carries out the reaction L-methionine + ATP + H2O = S-adenosyl-L-methionine + phosphate + diphosphate. The protein operates within amino-acid biosynthesis; S-adenosyl-L-methionine biosynthesis; S-adenosyl-L-methionine from L-methionine: step 1/1. Its function is as follows. Catalyzes the formation of S-adenosylmethionine from methionine and ATP. This chain is S-adenosylmethionine synthase, found in Methanobrevibacter smithii (strain ATCC 35061 / DSM 861 / OCM 144 / PS).